The following is a 47-amino-acid chain: Photosystem II reaction center protein K (47 aa).

Residues 1-10 (MNIGFDMILA) constitute a propeptide that is removed on maturation. A helical membrane pass occupies residues 22–42 (LVDVLPVIPLLFLLLAFVWQA).

This sequence belongs to the PsbK family. As to quaternary structure, PSII is composed of 1 copy each of membrane proteins PsbA, PsbB, PsbC, PsbD, PsbE, PsbF, PsbH, PsbI, PsbJ, PsbK, PsbL, PsbM, PsbT, PsbX, PsbY, PsbZ, Psb30/Ycf12, at least 3 peripheral proteins of the oxygen-evolving complex and a large number of cofactors. It forms dimeric complexes.

The protein resides in the plastid. Its subcellular location is the chloroplast thylakoid membrane. Functionally, one of the components of the core complex of photosystem II (PSII). PSII is a light-driven water:plastoquinone oxidoreductase that uses light energy to abstract electrons from H(2)O, generating O(2) and a proton gradient subsequently used for ATP formation. It consists of a core antenna complex that captures photons, and an electron transfer chain that converts photonic excitation into a charge separation. This Mesostigma viride (Green alga) protein is Photosystem II reaction center protein K.